Reading from the N-terminus, the 189-residue chain is Ribulose bisphosphate carboxylase small subunit, chloroplastic (189 aa).

The N-terminal 66 residues, 1–66 (MASSIMALSS…KTTSNGSRVR (66 aa)), are a transit peptide targeting the chloroplast.

The protein belongs to the RuBisCO small chain family. As to quaternary structure, heterohexadecamer of 8 large and 8 small subunits.

It is found in the plastid. It localises to the chloroplast. Its function is as follows. RuBisCO catalyzes two reactions: the carboxylation of D-ribulose 1,5-bisphosphate, the primary event in carbon dioxide fixation, as well as the oxidative fragmentation of the pentose substrate. Both reactions occur simultaneously and in competition at the same active site. Although the small subunit is not catalytic it is essential for maximal activity. The chain is Ribulose bisphosphate carboxylase small subunit, chloroplastic from Larix laricina (Tamarack).